Consider the following 347-residue polypeptide: Dual specificity mitogen-activated protein kinase kinase 3 (347 aa).

Methionine 1 is subject to N-acetylmethionine. Residues 1 to 15 show a composition bias toward low complexity; it reads MESPASSQPASMPQS. The interval 1 to 46 is disordered; the sequence is MESPASSQPASMPQSKGKSKRKKDLRISCMSKPPAPNPTPPRNLDS. Serine 3 and serine 15 each carry phosphoserine. In terms of domain architecture, Protein kinase spans 64–325; that stretch reads LVTISELGRG…YLELMEHPFF (262 aa). Residues 70 to 78 and lysine 93 each bind ATP; that span reads LGRGAYGVV. Residue aspartate 190 is the Proton acceptor of the active site. Phosphoserine is present on serine 218. A Phosphothreonine modification is found at threonine 222.

This sequence belongs to the protein kinase superfamily. STE Ser/Thr protein kinase family. MAP kinase kinase subfamily. Component of a signaling complex containing at least AKAP13, PKN1, MAPK14, ZAK and MAP2K3. Within this complex, AKAP13 interacts directly with PKN1, which in turn recruits MAPK14, MAP2K3 and ZAK. Binds to DYRK1B/MIRK and increases its kinase activity. Part of a complex with MAP3K3, RAC1 and CCM2. Interacts with ARRB1. As to quaternary structure, (Microbial infection) Interacts with Yersinia YopJ. Post-translationally, autophosphorylated. Phosphorylation on Ser-218 and Thr-222 by MAP kinase kinase kinases positively regulates the kinase activity. Phosphorylated by TAOK2. In terms of processing, (Microbial infection) Yersinia YopJ may acetylate Ser/Thr residues, preventing phosphorylation and activation, thus blocking the MAPK signaling pathway. As to expression, abundant expression is seen in the skeletal muscle. It is also widely expressed in other tissues.

It carries out the reaction L-seryl-[protein] + ATP = O-phospho-L-seryl-[protein] + ADP + H(+). The enzyme catalyses L-threonyl-[protein] + ATP = O-phospho-L-threonyl-[protein] + ADP + H(+). The catalysed reaction is L-tyrosyl-[protein] + ATP = O-phospho-L-tyrosyl-[protein] + ADP + H(+). With respect to regulation, activated by dual phosphorylation on Ser-218 and Thr-222. Functionally, dual specificity kinase. Is activated by cytokines and environmental stress in vivo. Catalyzes the concomitant phosphorylation of a threonine and a tyrosine residue in the MAP kinase p38. Part of a signaling cascade that begins with the activation of the adrenergic receptor ADRA1B and leads to the activation of MAPK14. This chain is Dual specificity mitogen-activated protein kinase kinase 3 (MAP2K3), found in Homo sapiens (Human).